The sequence spans 277 residues: Shikimate dehydrogenase (NADP(+)) (277 aa).

Residues 18-20 and T65 each bind shikimate; that span reads SKS. K69 (proton acceptor) is an active-site residue. NADP(+) is bound at residue E81. Shikimate is bound by residues N90 and D106. NADP(+) contacts are provided by residues 130–134, 154–159, and M217; these read GAGGA and NRTFSK. Residue Y219 coordinates shikimate. G241 is an NADP(+) binding site.

Belongs to the shikimate dehydrogenase family. As to quaternary structure, homodimer.

It carries out the reaction shikimate + NADP(+) = 3-dehydroshikimate + NADPH + H(+). It functions in the pathway metabolic intermediate biosynthesis; chorismate biosynthesis; chorismate from D-erythrose 4-phosphate and phosphoenolpyruvate: step 4/7. Functionally, involved in the biosynthesis of the chorismate, which leads to the biosynthesis of aromatic amino acids. Catalyzes the reversible NADPH linked reduction of 3-dehydroshikimate (DHSA) to yield shikimate (SA). This Vibrio parahaemolyticus serotype O3:K6 (strain RIMD 2210633) protein is Shikimate dehydrogenase (NADP(+)).